Reading from the N-terminus, the 339-residue chain is DNA-directed RNA polymerase subunit alpha (339 aa).

The tract at residues 1–233 is alpha N-terminal domain (alpha-NTD); that stretch reads MVREEVAGST…DLFLPFLHAE (233 aa). Positions 266 to 339 are alpha C-terminal domain (alpha-CTD); it reads GIPLNCIFID…IDLLKNKLSF (74 aa).

Belongs to the RNA polymerase alpha chain family. As to quaternary structure, in plastids the minimal PEP RNA polymerase catalytic core is composed of four subunits: alpha, beta, beta', and beta''. When a (nuclear-encoded) sigma factor is associated with the core the holoenzyme is formed, which can initiate transcription.

The protein localises to the plastid. It localises to the chloroplast. The catalysed reaction is RNA(n) + a ribonucleoside 5'-triphosphate = RNA(n+1) + diphosphate. Its function is as follows. DNA-dependent RNA polymerase catalyzes the transcription of DNA into RNA using the four ribonucleoside triphosphates as substrates. The sequence is that of DNA-directed RNA polymerase subunit alpha from Hordeum bulbosum (Bulbous barley).